Consider the following 496-residue polypeptide: Angiopoietin-2 (496 aa).

An N-terminal signal peptide occupies residues 1–18 (MWQIVFFTLSCDLVLAAA). 6 N-linked (GlcNAc...) asparagine glycosylation sites follow: Asn89, Asn119, Asn133, Asn151, Asn240, and Asn304. A coiled-coil region spans residues 166 to 248 (STNKLEKQIL…VNNSVLQKQQ (83 aa)). The region spanning 275–495 (KEEQISFRDC…ATTMMIRPAD (221 aa)) is the Fibrinogen C-terminal domain. Residues Cys284 and Cys313 are joined by a disulfide bond. Ca(2+)-binding residues include Asp429, Asp431, Cys433, and Cys435. 2 disulfides stabilise this stretch: Cys433–Cys435 and Cys437–Cys450.

As to quaternary structure, interacts with TEK/TIE2, competing for the same binding site as ANGPT1. Interacts with ITGA5. Interacts with SVEP1/polydom. Interacts with THBD; this interaction significantly inhibits the generation of activated PC and TAFIa/CPB2 by the thrombin/thrombomodulin complex.

It is found in the secreted. Binds to TEK/TIE2, competing for the ANGPT1 binding site, and modulating ANGPT1 signaling. Can induce tyrosine phosphorylation of TEK/TIE2 in the absence of ANGPT1. In the absence of angiogenic inducers, such as VEGF, ANGPT2-mediated loosening of cell-matrix contacts may induce endothelial cell apoptosis with consequent vascular regression. In concert with VEGF, it may facilitate endothelial cell migration and proliferation, thus serving as a permissive angiogenic signal. Involved in the regulation of lymphangiogenesis. This Homo sapiens (Human) protein is Angiopoietin-2 (ANGPT2).